Consider the following 455-residue polypeptide: Chromosomal replication initiator protein DnaA (455 aa).

The interval 1–75 (MLERNDLWNL…AMQATNEQIR (75 aa)) is domain I, interacts with DnaA modulators. Residues 75-117 (RPVMITEEERQQLTRDKDSQVTTGNVAGQQPTTATTPTFMRET) form a domain II region. A compositionally biased stretch (basic and acidic residues) spans 84-93 (RQQLTRDKDS). The interval 84–107 (RQQLTRDKDSQVTTGNVAGQQPTT) is disordered. Positions 118-334 (KLNPKYTFDT…GALARVQAYS (217 aa)) are domain III, AAA+ region. 4 residues coordinate ATP: Gly-162, Gly-164, Lys-165, and Thr-166. The interval 335 to 455 (RLNNSPITTS…VGDLTGQLKS (121 aa)) is domain IV, binds dsDNA.

This sequence belongs to the DnaA family. Oligomerizes as a right-handed, spiral filament on DNA at oriC.

It is found in the cytoplasm. In terms of biological role, plays an essential role in the initiation and regulation of chromosomal replication. ATP-DnaA binds to the origin of replication (oriC) to initiate formation of the DNA replication initiation complex once per cell cycle. Binds the DnaA box (a 9 base pair repeat at the origin) and separates the double-stranded (ds)DNA. Forms a right-handed helical filament on oriC DNA; dsDNA binds to the exterior of the filament while single-stranded (ss)DNA is stabiized in the filament's interior. The ATP-DnaA-oriC complex binds and stabilizes one strand of the AT-rich DNA unwinding element (DUE), permitting loading of DNA polymerase. After initiation quickly degrades to an ADP-DnaA complex that is not apt for DNA replication. Binds acidic phospholipids. The chain is Chromosomal replication initiator protein DnaA from Lactiplantibacillus plantarum (strain ATCC BAA-793 / NCIMB 8826 / WCFS1) (Lactobacillus plantarum).